A 1062-amino-acid chain; its full sequence is Inactive tyrosine-protein kinase 7 (1062 aa).

The signal sequence occupies residues 1-22; it reads MGARPLTLLRALLLPLLAGAQA. 7 consecutive Ig-like C2-type domains span residues 23-112, 120-210, 217-309, 301-399, 404-489, 495-578, and 570-672; these read AIVF…ASFN, PVVL…FTLS, ARVV…EATL, PPIV…VNIT, PTWL…ARVQ, KFTP…HVQL, and GQIR…APLL. At 23 to 696 the chain is on the extracellular side; that stretch reads AIVFIKEPSS…SPPPYKMIQT (674 aa). A disulfide bridge links cysteine 45 with cysteine 93. 6 N-linked (GlcNAc...) asparagine glycosylation sites follow: asparagine 98, asparagine 108, asparagine 176, asparagine 206, asparagine 260, and asparagine 275. Cysteine 142 and cysteine 192 are oxidised to a cystine. 2 cysteine pairs are disulfide-bonded: cysteine 238–cysteine 293 and cysteine 335–cysteine 383. Residues asparagine 397, asparagine 455, asparagine 559, and asparagine 638 are each glycosylated (N-linked (GlcNAc...) asparagine). 3 disulfides stabilise this stretch: cysteine 425–cysteine 473, cysteine 516–cysteine 562, and cysteine 605–cysteine 656. Residues 697–717 form a helical membrane-spanning segment; that stretch reads IGLSVGAAVAYIIAVLGLMFY. The Cytoplasmic portion of the chain corresponds to 718–1062; that stretch reads CKKRCKAKRL…LGDSPADSKQ (345 aa). Disordered stretches follow at residues 728–750 and 1039–1062; these read QKQP…QNGQ and NPKD…DSKQ. The interaction with CTNNB1 stretch occupies residues 786-1062; that stretch reads ASLQPITTLG…LGDSPADSKQ (277 aa). Positions 788-1058 constitute a Protein kinase; inactive domain; it reads LQPITTLGKS…IASTLGDSPA (271 aa). Serine 1056 carries the phosphoserine modification.

It belongs to the protein kinase superfamily. Tyr protein kinase family. Insulin receptor subfamily. As to quaternary structure, interacts with CTNNB1. In terms of processing, MMP14 cleaves PTK7 between Pro-613 and Leu-614 generating an N-terminal soluble (70 kDa) fragment and a membrane C-terminal (50 kDa) fragment. Proteolysis by MMP14 regulates PTK7 function in non-canonical Wnt signaling pathway. In terms of tissue distribution, expressed at high levels in lung and un-pregnant uterus among adult tissues, and in the tail, limbs, somites, gut and craniofacial regions among embryonic tissues.

Its subcellular location is the membrane. It is found in the cell junction. In terms of biological role, inactive tyrosine kinase involved in Wnt signaling pathway. Component of both the non-canonical (also known as the Wnt/planar cell polarity signaling) and the canonical Wnt signaling pathway. Functions in cell adhesion, cell migration, cell polarity, proliferation, actin cytoskeleton reorganization and apoptosis. Has a role in embryogenesis, epithelial tissue organization and angiogenesis. This Mus musculus (Mouse) protein is Inactive tyrosine-protein kinase 7 (Ptk7).